An 872-amino-acid polypeptide reads, in one-letter code: Bifunctional uridylyltransferase/uridylyl-removing enzyme (872 aa).

The interval 1–332 (MALPNKVKKL…PKHHQPIIQE (332 aa)) is uridylyltransferase. Residues 333–691 (LDRNFERIGN…VSNKAMHGGT (359 aa)) form a uridylyl-removing region. The HD domain occupies 450–572 (VDEHTHRLIN…VKTERQLDYL (123 aa)). ACT domains follow at residues 692–773 (QVFV…FKKN) and 799–872 (LIEI…AETE).

This sequence belongs to the GlnD family. Mg(2+) serves as cofactor.

The enzyme catalyses [protein-PII]-L-tyrosine + UTP = [protein-PII]-uridylyl-L-tyrosine + diphosphate. It carries out the reaction [protein-PII]-uridylyl-L-tyrosine + H2O = [protein-PII]-L-tyrosine + UMP + H(+). With respect to regulation, uridylyltransferase (UTase) activity is inhibited by glutamine, while glutamine activates uridylyl-removing (UR) activity. In terms of biological role, modifies, by uridylylation and deuridylylation, the PII regulatory proteins (GlnB and homologs), in response to the nitrogen status of the cell that GlnD senses through the glutamine level. Under low glutamine levels, catalyzes the conversion of the PII proteins and UTP to PII-UMP and PPi, while under higher glutamine levels, GlnD hydrolyzes PII-UMP to PII and UMP (deuridylylation). Thus, controls uridylylation state and activity of the PII proteins, and plays an important role in the regulation of nitrogen assimilation and metabolism. This is Bifunctional uridylyltransferase/uridylyl-removing enzyme from Pseudoalteromonas translucida (strain TAC 125).